The sequence spans 236 residues: tRNA (guanine-N(7)-)-methyltransferase (236 aa).

Residues 1–17 (MSERKSDPDRDDSERAF) are compositionally biased toward basic and acidic residues. Positions 1–23 (MSERKSDPDRDDSERAFFGRRKG) are disordered. Glu67, Glu92, Asp119, and Asp141 together coordinate S-adenosyl-L-methionine. Residue Asp141 is part of the active site. Residues Lys145 and Asp177 each coordinate substrate.

This sequence belongs to the class I-like SAM-binding methyltransferase superfamily. TrmB family.

It carries out the reaction guanosine(46) in tRNA + S-adenosyl-L-methionine = N(7)-methylguanosine(46) in tRNA + S-adenosyl-L-homocysteine. Its pathway is tRNA modification; N(7)-methylguanine-tRNA biosynthesis. Functionally, catalyzes the formation of N(7)-methylguanine at position 46 (m7G46) in tRNA. This is tRNA (guanine-N(7)-)-methyltransferase from Bradyrhizobium diazoefficiens (strain JCM 10833 / BCRC 13528 / IAM 13628 / NBRC 14792 / USDA 110).